A 104-amino-acid chain; its full sequence is L-rhamnose mutarotase (104 aa).

Position 18 (Tyr-18) interacts with substrate. The Proton donor role is filled by His-22. Residues Tyr-41 and 76 to 77 (WW) contribute to the substrate site.

This sequence belongs to the rhamnose mutarotase family. As to quaternary structure, homodimer.

The protein localises to the cytoplasm. The enzyme catalyses alpha-L-rhamnose = beta-L-rhamnose. The protein operates within carbohydrate metabolism; L-rhamnose metabolism. Involved in the anomeric conversion of L-rhamnose. The polypeptide is L-rhamnose mutarotase (Cronobacter sakazakii (strain ATCC BAA-894) (Enterobacter sakazakii)).